The following is a 336-amino-acid chain: MFLTLIAAIISFMVSAFTMPYFIKFYQLKKIGGQQMHEDVKQHLAKAGTPTMGGTVFLLVATAVSLLVNLFSIKNTQSLALISGILSIVVIYGIIGFLDDFLKIFKQINEGLTAKQKLALQLAGGLMFYFLHVSPSGISSINVFGYQLSLGIFYLFFVLFWVVGFSNAVNLTDGIDGLASISVVISLVTYGVIAYVQGQFDVLLLIGTMIGALLGFFCFNHKPAKVFMGDVGSLALGAMLAAISIALRQEWTLLIIGIVYVLETSSVMLQVSYFKYTKKKYGEGRRIFRMTPFHHHLELGGLSGKGKKWSEWQVDAFLWGVGSLASLLVLAILYVF.

The next 10 helical transmembrane spans lie at 3–23 (LTLIAAIISFMVSAFTMPYFI), 53–73 (GGTVFLLVATAVSLLVNLFSI), 78–98 (SLALISGILSIVVIYGIIGFL), 118–138 (LALQLAGGLMFYFLHVSPSGI), 143–163 (VFGYQLSLGIFYLFFVLFWVV), 174–194 (GIDGLASISVVISLVTYGVIA), 200–220 (FDVLLLIGTMIGALLGFFCFN), 226–246 (VFMGDVGSLALGAMLAAISIA), 251–271 (WTLLIIGIVYVLETSSVMLQV), and 316–336 (AFLWGVGSLASLLVLAILYVF).

It belongs to the glycosyltransferase 4 family. MraY subfamily. Requires Mg(2+) as cofactor.

It is found in the cell membrane. The enzyme catalyses UDP-N-acetyl-alpha-D-muramoyl-L-alanyl-gamma-D-glutamyl-L-lysyl-D-alanyl-D-alanine + di-trans,octa-cis-undecaprenyl phosphate = Mur2Ac(oyl-L-Ala-gamma-D-Glu-L-Lys-D-Ala-D-Ala)-di-trans,octa-cis-undecaprenyl diphosphate + UMP. It functions in the pathway cell wall biogenesis; peptidoglycan biosynthesis. Its function is as follows. Catalyzes the initial step of the lipid cycle reactions in the biosynthesis of the cell wall peptidoglycan: transfers peptidoglycan precursor phospho-MurNAc-pentapeptide from UDP-MurNAc-pentapeptide onto the lipid carrier undecaprenyl phosphate, yielding undecaprenyl-pyrophosphoryl-MurNAc-pentapeptide, known as lipid I. This is Phospho-N-acetylmuramoyl-pentapeptide-transferase from Streptococcus pyogenes serotype M5 (strain Manfredo).